A 111-amino-acid chain; its full sequence is MKTTTCSLLICISLLQLMVPVNTDETIEIIVENKVKELLANPANYPSTVTKTLSCTSVKTMNRWASCPAGMTATGCACGFACGSWEIQSGDTCNCLCLLVDWTTARCCQLS.

Positions 1 to 23 (MKTTTCSLLICISLLQLMVPVNT) are cleaved as a signal peptide. Intrachain disulfides connect cysteine 55–cysteine 108, cysteine 67–cysteine 107, cysteine 76–cysteine 93, cysteine 78–cysteine 95, and cysteine 82–cysteine 97.

Belongs to the resistin/FIZZ family. In terms of assembly, monomer. As to expression, highest levels in adipose tissue.

The protein localises to the secreted. Its function is as follows. Probable hormone. Plays a role in pulmonary vascular remodeling. This chain is Resistin-like alpha (Retnla), found in Mus musculus (Mouse).